We begin with the raw amino-acid sequence, 263 residues long: 4-hydroxy-2-oxo-heptane-1,7-dioate aldolase (263 aa).

H45 (proton acceptor) is an active-site residue. Q147 serves as a coordination point for substrate. E149 contacts a divalent metal cation. Positions 174 and 175 each coordinate substrate. D175 serves as a coordination point for a divalent metal cation.

It belongs to the HpcH/HpaI aldolase family. As to quaternary structure, homohexamer; trimer of dimers. It depends on a divalent metal cation as a cofactor.

It carries out the reaction 4-hydroxy-2-oxoheptanedioate = succinate semialdehyde + pyruvate. The protein operates within aromatic compound metabolism; 4-hydroxyphenylacetate degradation; pyruvate and succinate semialdehyde from 4-hydroxyphenylacetate: step 7/7. Functionally, catalyzes the reversible retro-aldol cleavage of 4-hydroxy-2-ketoheptane-1,7-dioate (HKHD) to pyruvate and succinic semialdehyde. This chain is 4-hydroxy-2-oxo-heptane-1,7-dioate aldolase, found in Salmonella choleraesuis (strain SC-B67).